The chain runs to 363 residues: Pyrimidine monooxygenase RutA (363 aa).

FMN contacts are provided by residues 49 to 50, N115, E124, 140 to 141, and S190; these read IK and RY.

The protein belongs to the NtaA/SnaA/DszA monooxygenase family. RutA subfamily.

It carries out the reaction uracil + FMNH2 + NADH + O2 = (Z)-3-ureidoacrylate + FMN + NAD(+) + H2O + H(+). The enzyme catalyses thymine + FMNH2 + NADH + O2 = (Z)-2-methylureidoacrylate + FMN + NAD(+) + H2O + H(+). In terms of biological role, catalyzes the pyrimidine ring opening between N-3 and C-4 by an unusual flavin hydroperoxide-catalyzed mechanism, adding oxygen atoms in the process to yield ureidoacrylate peracid, that immediately reacts with FMN forming ureidoacrylate and FMN-N(5)-oxide. The FMN-N(5)-oxide reacts spontaneously with NADH to produce FMN. Requires the flavin reductase RutF to regenerate FMN in vivo. In Escherichia coli O103:H2 (strain 12009 / EHEC), this protein is Pyrimidine monooxygenase RutA.